The chain runs to 291 residues: Urease accessory protein UreD (291 aa).

Belongs to the UreD family. In terms of assembly, ureD, UreF and UreG form a complex that acts as a GTP-hydrolysis-dependent molecular chaperone, activating the urease apoprotein by helping to assemble the nickel containing metallocenter of UreC. The UreE protein probably delivers the nickel.

Its subcellular location is the cytoplasm. Functionally, required for maturation of urease via the functional incorporation of the urease nickel metallocenter. This chain is Urease accessory protein UreD, found in Acinetobacter baumannii (strain ACICU).